A 174-amino-acid chain; its full sequence is Co-chaperone protein HscB homolog (174 aa).

The J domain occupies 2–74 (NYFELFKFPP…IRRAEHMLSL (73 aa)).

It belongs to the HscB family. As to quaternary structure, interacts with HscA and stimulates its ATPase activity.

Co-chaperone involved in the maturation of iron-sulfur cluster-containing proteins. Seems to help targeting proteins to be folded toward HscA. This is Co-chaperone protein HscB homolog from Shewanella baltica (strain OS195).